The primary structure comprises 286 residues: Putative cyclin-H (286 aa).

Positions 79–148 constitute a Cyclin N-terminal domain; it reads AIIYIKRFYL…ILESLNFNLI (70 aa). The tract at residues 235-286 is disordered; it reads NNNNNNNNNNNNNNNNNNNNNNNNNNNNNNNNNNNNNNNNNNNNNNNNNLLL.

The protein belongs to the cyclin family. Cyclin C subfamily.

It is found in the nucleus. Its function is as follows. May regulate cdk7 involved in transcription regulation and cell cycle progression. This is Putative cyclin-H (cycH) from Dictyostelium discoideum (Social amoeba).